The primary structure comprises 63 residues: Metallothionein (63 aa).

The tract at residues 1–30 (MDPQDCTCAAGDSCSCAGSCKCKNCRCRSC) is beta. Positions 6, 8, 14, 16, 20, 22, 25, 27, 30, 34, 35, 37, 38, 42, 45, 49, 51, 59, 61, and 62 each coordinate a divalent metal cation. Residues 31–63 (RKSCCSCCPAGCNNCAKGCVCKEPASSKCSCCH) form an alpha region.

It belongs to the metallothionein superfamily. Type 1 family.

Metallothioneins have a high content of cysteine residues that bind various heavy metals. This chain is Metallothionein, found in Anas platyrhynchos (Mallard).